Consider the following 498-residue polypeptide: Dynein regulatory complex subunit 5 (498 aa).

Disordered stretches follow at residues 27–52 (ALGSSSTGPTSLKTSSTPTPGQLKTK) and 200–223 (MPTPLQGEEQSDSGSEGEGSEPEK). The segment covering 28–47 (LGSSSTGPTSLKTSSTPTPG) has biased composition (low complexity). LRR repeat units lie at residues 276-299 (CHTLKIFKLTRSKVDDDKARILIR), 306-327 (ALEELDLSHNLIGDRGARAAAK), 333-353 (RLRVLNLANNQLQAPGAQSLA), 361-382 (NLVFLNLRLNCIEDEGGQAIAH), 389-409 (CLSVLHLGGNKLSEPTATLLS), and 417-438 (TLVSLNLSCNHIGQDGGKQLLE).

Belongs to the DRC5 family. As to quaternary structure, component of the nexin-dynein regulatory complex (N-DRC). Interacts with DRC1. Interacts with FBXL13/DRC6, DRC3 and DRC7. As to expression, testis-specific (at protein level).

Its subcellular location is the cell projection. It localises to the cilium. The protein resides in the flagellum. The protein localises to the cytoplasm. It is found in the cytoskeleton. Its subcellular location is the flagellum axoneme. Its function is as follows. Component of the nexin-dynein regulatory complex (N-DRC) a key regulator of ciliary/flagellar motility which maintains the alignment and integrity of the distal axoneme and regulates microtubule sliding in motile axonemes. May play a role in the assembly of N-DRC. Required for sperm motility. In Mus musculus (Mouse), this protein is Dynein regulatory complex subunit 5 (Tcte1).